We begin with the raw amino-acid sequence, 445 residues long: Putrescine hydroxycinnamoyltransferase 1 (445 aa).

Residues histidine 154 and aspartate 388 each act as proton acceptor in the active site.

Belongs to the plant acyltransferase family. Expressed in leaves.

In terms of biological role, hydroxycinnamoyl transferase that catalyzes the transfer of an acyl from p-coumaryol-CoA to putrescine, to produce coumaroyl putrescine. The sequence is that of Putrescine hydroxycinnamoyltransferase 1 from Oryza sativa subsp. japonica (Rice).